The sequence spans 230 residues: Large ribosomal subunit protein uL1 (230 aa).

This sequence belongs to the universal ribosomal protein uL1 family. In terms of assembly, part of the 50S ribosomal subunit.

Binds directly to 23S rRNA. The L1 stalk is quite mobile in the ribosome, and is involved in E site tRNA release. Its function is as follows. Protein L1 is also a translational repressor protein, it controls the translation of the L11 operon by binding to its mRNA. The polypeptide is Large ribosomal subunit protein uL1 (Acidithiobacillus ferrooxidans (strain ATCC 53993 / BNL-5-31) (Leptospirillum ferrooxidans (ATCC 53993))).